The chain runs to 253 residues: TasA anchoring/assembly protein (253 aa).

The first 32 residues, 1-32, serve as a signal peptide directing secretion; that stretch reads MFRLFHNQQKAKTKLKVLLIFQLSVIFSLTAA. Residues 50-57 form an important for TasA fiber formation region; the sequence is TFDVSLQT. Basic and acidic residues predominate over residues 190–241; the sequence is EKPTVPKKETKSDVKKENETTQKDIPEKTMKEETSQEAVTKEKETQSDQKES. The interval 190 to 253 is disordered; it reads EKPTVPKKET…EDEKSNEADQ (64 aa).

It is found in the secreted. Its subcellular location is the cell wall. Its function is as follows. Required for biofilm formation. Required for the proper anchoring and polymerization of TasA amyloid fibers at the cell surface. Is also a minor component of TasA fibers. The sequence is that of TasA anchoring/assembly protein from Bacillus subtilis (strain 168).